We begin with the raw amino-acid sequence, 193 residues long: Signal peptidase I T (193 aa).

At 1-25 (MTEEKNTNTEKTAKKKTNTYLEWGK) the chain is on the cytoplasmic side. A helical membrane pass occupies residues 26–42 (AIVIAVLLALLIRHFLF). The Extracellular portion of the chain corresponds to 43–193 (EPYLVEGSSM…FPFNEMRQTK (151 aa)). Residues S51 and K93 contribute to the active site.

Belongs to the peptidase S26 family.

Its subcellular location is the cell membrane. It carries out the reaction Cleavage of hydrophobic, N-terminal signal or leader sequences from secreted and periplasmic proteins.. The sequence is that of Signal peptidase I T (sipT) from Bacillus subtilis (strain 168).